We begin with the raw amino-acid sequence, 116 residues long: Cysteine proteinase inhibitor 1 (116 aa).

The first 22 residues, 1–22, serve as a signal peptide directing secretion; the sequence is MVPKPLSLLLLLLLALSAAVVG. The Cystatin domain occupies 30-89; that stretch reads GGWRPIENLNSAEVQDVAQFAVSEHNKQANDELQYQSVVRGYTQVVAGTNYRLVIAAKDG. The Secondary area of contact signature appears at 73–77; it reads QVVAG. Asn109 carries an N-linked (GlcNAc...) asparagine glycan.

The protein belongs to the cystatin family. Phytocystatin subfamily.

The protein resides in the secreted. Functionally, specific inhibitor of papain family cysteine proteinases. In Actinidia chinensis var. chinensis (Chinese soft-hair kiwi), this protein is Cysteine proteinase inhibitor 1.